We begin with the raw amino-acid sequence, 300 residues long: N-acetylmuramic acid 6-phosphate etherase (300 aa).

The 164-residue stretch at 57–220 folds into the SIS domain; that stretch reads IAVAFQSGGR…TTGAMIRTGK (164 aa). Glu85 functions as the Proton donor in the catalytic mechanism. The active site involves Glu116.

This sequence belongs to the GCKR-like family. MurNAc-6-P etherase subfamily. Homodimer.

The enzyme catalyses N-acetyl-D-muramate 6-phosphate + H2O = N-acetyl-D-glucosamine 6-phosphate + (R)-lactate. Its pathway is amino-sugar metabolism; 1,6-anhydro-N-acetylmuramate degradation. It functions in the pathway amino-sugar metabolism; N-acetylmuramate degradation. The protein operates within cell wall biogenesis; peptidoglycan recycling. Its function is as follows. Specifically catalyzes the cleavage of the D-lactyl ether substituent of MurNAc 6-phosphate, producing GlcNAc 6-phosphate and D-lactate. Together with AnmK, is also required for the utilization of anhydro-N-acetylmuramic acid (anhMurNAc) either imported from the medium or derived from its own cell wall murein, and thus plays a role in cell wall recycling. The protein is N-acetylmuramic acid 6-phosphate etherase of Aliivibrio fischeri (strain ATCC 700601 / ES114) (Vibrio fischeri).